Reading from the N-terminus, the 194-residue chain is A-type ATP synthase subunit E (194 aa).

The protein belongs to the V-ATPase E subunit family. In terms of assembly, has multiple subunits with at least A(3), B(3), C, D, E, F, H, I and proteolipid K(x).

The protein localises to the cell membrane. In terms of biological role, component of the A-type ATP synthase that produces ATP from ADP in the presence of a proton gradient across the membrane. This is A-type ATP synthase subunit E from Saccharolobus islandicus (strain M.16.27) (Sulfolobus islandicus).